A 529-amino-acid chain; its full sequence is Glycerol kinase 5 (529 aa).

Positions 22 and 23 each coordinate ATP. Arg92, Asp269, and Gln270 together coordinate glycerol. ATP-binding residues include Thr291, Gly334, and Gly434.

It belongs to the FGGY kinase family.

The protein localises to the cytoplasm. It catalyses the reaction glycerol + ATP = sn-glycerol 3-phosphate + ADP + H(+). It participates in polyol metabolism; glycerol degradation via glycerol kinase pathway; sn-glycerol 3-phosphate from glycerol: step 1/1. Functionally, skin-specific kinase that plays a key role in glycerol metabolism, catalyzing its phosphorylation to produce sn-glycerol 3-phosphate. Involved in skin-specific regulation of sterol regulatory element-binding protein (SREBP) processing and lipid biosynthesis. This is Glycerol kinase 5 (gk5) from Danio rerio (Zebrafish).